Consider the following 796-residue polypeptide: MKNLNGRAHNACYHPYYQQQLQQQQQQQQQHQQQQLLQQQQQQLLQQQQQQLQQQLQLPYATQYTQQQQQQQQQYNQQQYYNQQLQQQQQQQQQQHLLRQQQLLPTQSAYQQQQSKQSYNNNNNSNSNSNTSAANMTAMTARVNMHAATVATAHSNGNSNANANATTAAMAAMCQMQSFLSHQQQQQQQQQQQQQYNNNCAHINYNQQQQQQQQQQQQQQQLPTATTATTTNGDKLALDSASEIANFLASELFMQQLVTFDGIQSAPTLTTPTLTPTTLRTIEETIFELTTETQNVPFQAGFKPPPLTSLCNVTVVNNNNNNNNNNNNNSSNNNNNNSNTVTTTAAAAGNLTLASPMSTMSTLNTNPQLDLLGFNCGSVPESDSEQSNVSWNVGGPHDDQSTTDTSSAATDSTSYQNGGHMFGNNGSNGSGVNNFTGSLAGVGSAGRGTSSTSNNATPARRGGGRRPNKSANMSPEEEEKRRVRRERNKLAAARCRKRRVDQTNELSEEVDGLLKKNEDLKKEIEILTNTRHQLNFVLEAHRPTCQKVRDDLLSVTTCNGLIAPTAMLSSGSNGSHHHNSNSNNSNNNNSNNNNNSNSNDSSCGTITGFDASLNSTGRSNSPLDLKPVLIDDQLLVNIKHEPHDAGLDSSSSLDQDGPPAAKRFALPDIATLKPHSASLTTPTGPVASLNTPMSGMAPTAFGIHAKPMPKTRPNTLNVNQSLAQPGNIAIGKTPMQIEGVPIQTPSAGNFNFDSLMAGGTGLTPVSGPLVPTCSSQNKHPLELPTPTSEPSKLVSL.

Disordered regions lie at residues 109–132, 315–341, 374–429, and 442–490; these read AYQQQQSKQSYNNNNNSNSNSNTS, VVNNNNNNNNNNNNNSSNNNNNNSNTV, FNCG…GSNG, and VGSA…RNKL. Residues 402-429 are compositionally biased toward low complexity; that stretch reads TTDTSSAATDSTSYQNGGHMFGNNGSNG. Residues 447–457 show a composition bias toward polar residues; the sequence is RGTSSTSNNAT. Residues 478 to 541 form the bZIP domain; the sequence is EEKRRVRRER…HQLNFVLEAH (64 aa). Residues 480–499 are basic motif; that stretch reads KRRVRRERNKLAAARCRKRR. A leucine-zipper region spans residues 506-534; sequence LSEEVDGLLKKNEDLKKEIEILTNTRHQL. Positions 569–601 are disordered; that stretch reads SSGSNGSHHHNSNSNNSNNNNSNNNNNSNSNDS. Position 621 is a phosphoserine (Ser-621). Disordered regions lie at residues 642 to 661 and 774 to 796; these read PHDAGLDSSSSLDQDGPPAA and SSQNKHPLELPTPTSEPSKLVSL.

This sequence belongs to the bZIP family. Fos subfamily. In terms of assembly, homodimer. Heterodimer with Jra. The kay-Jra heterodimer binds more stably to the AP-1 site than either of the two proteins alone.

It localises to the nucleus. In terms of biological role, developmentally regulated transcription factor AP-1 binds and recognizes the enhancer DNA sequence: 5'-TGA[CG]TCA-3'. May play a role in the function or determination of a particular subset of cells in the developing embryo. It is able to carry out its function either independently of or in conjunction with Jra. The chain is Transcription factor kayak from Drosophila grimshawi (Hawaiian fruit fly).